A 174-amino-acid polypeptide reads, in one-letter code: Mediator of RNA polymerase II transcription subunit 30 (174 aa).

Residues 113–166 are a coiled coil; sequence VEDDSSKLEDRMANQLRAASEERREVLEVNKKLKQKNQQLKMIMDQLRNLIWEI.

This sequence belongs to the Mediator complex subunit 30 family. In terms of assembly, component of the Mediator complex.

The protein localises to the nucleus. Component of the Mediator complex, a coactivator involved in the regulated transcription of nearly all RNA polymerase II-dependent genes. Mediator functions as a bridge to convey information from gene-specific regulatory proteins to the basal RNA polymerase II transcription machinery. Mediator is recruited to promoters by direct interactions with regulatory proteins and serves as a scaffold for the assembly of a functional preinitiation complex with RNA polymerase II and the general transcription factors. This is Mediator of RNA polymerase II transcription subunit 30 (med30) from Danio rerio (Zebrafish).